The following is a 682-amino-acid chain: Epithelial sodium channel subunit alpha (682 aa).

At 1-111 the chain is on the cytoplasmic side; it reads MLMRLLPLPS…CSKHNRMKTA (111 aa). The segment at 34-69 is disordered; that stretch reads AQGPLPPQPLQGPLKGDKCEQPGLGPEPTAPQQHTE. The chain crosses the membrane as a helical span at residues 112–132; the sequence is FWAVLWLCTFGMMYWQFALLF. At 133–586 the chain is on the extracellular side; the sequence is GEYFSYPVSL…SQWSLWFGSS (454 aa). Disulfide bonds link Cys-159/Cys-329, Cys-253/Cys-260, Cys-306/Cys-313, Cys-418/Cys-503, Cys-440/Cys-480, Cys-440/Cys-499, Cys-444/Cys-495, Cys-453/Cys-480, Cys-453/Cys-503, and Cys-455/Cys-469. Residue Asn-191 is glycosylated (N-linked (GlcNAc...) asparagine). A gating release of inhibition by proteolysis (GRIP); protease-sensitive region that is responsible for the proteolytic activation of the channel region spans residues 201-267; that stretch reads RSRRSLADTL…SDCFYQTSSS (67 aa). A disordered region spans residues 221–240; it reads PEPRRARSSDPSSVRDNNPR. N-linked (GlcNAc...) asparagine glycosylation is present at Asn-504. A helical transmembrane segment spans residues 587–607; the sequence is VLSVVEMAEFMFDLLVITLLM. The Cytoplasmic portion of the chain corresponds to 608-682; sequence LLRRFRSRYW…SSAACAPREP (75 aa). Positions 653-657 match the PY motif; recruits WW domain-containing proteins and is thereby required for ubiquitination and inhibition of the channel by NEDD4 and NEDD4L motif; that stretch reads PPPAY.

This sequence belongs to the amiloride-sensitive sodium channel (TC 1.A.6) family. SCNN1A subfamily. As to quaternary structure, heterotrimer; containing an alpha/SCNN1A, a beta/SCNN1B and a gamma/SCNN1G subunit. Interacts with WWP1 (via WW domains). Interacts with WWP2 (via WW domains); inhibits the channel. Interacts with BPIFA1; the interaction is indirect via SCNN1B and inhibits the proteolytic processing of SCNN1A and SCNN1G and the activation of ENaC. Interacts with the full-length immature form of PCSK9 (pro-PCSK9). Ubiquitinated. Can be ubiquitinated at multiple sites and undergo monoubiquitination and polyubiquitination. Ubiquitination by NEDD4 or NEDD4L inhibits the ENaC channel through endocytosis, intracellular retention and degradation of its individual subunits. Post-translationally, N-glycosylated. In terms of processing, ENaC is activated through the proteolytic maturation of its subunits. Furin cleaves the SCNN1A subunit, which results in a stepwise increase in the open probability of the channel due to the release of an inhibitory tract. BPIFA1, which is recruited by the SCNN1B subunit, prevents the proteolytic activation of ENaC.

Its subcellular location is the apical cell membrane. The protein resides in the cell projection. The protein localises to the cilium. It localises to the cytoplasmic granule. It is found in the cytoplasm. Its subcellular location is the cytoplasmic vesicle. The protein resides in the secretory vesicle. The protein localises to the acrosome. It localises to the flagellum. The enzyme catalyses Na(+)(in) = Na(+)(out). Originally identified and characterized by its inhibition by the diuretic drug amiloride. This is one of the three pore-forming subunits of the heterotrimeric epithelial sodium channel (ENaC), a critical regulator of sodium balance and fluid homeostasis. ENaC operates in epithelial tissues, where it mediates the electrodiffusion of sodium ions from extracellular fluid through the apical membrane of cells, with water following osmotically. It plays a key role in maintaining sodium homeostasis through electrogenic sodium reabsorption in the kidneys. Additionally, ENaC is essential for airway surface liquid homeostasis, which is crucial for proper mucus clearance. The sequence is that of Epithelial sodium channel subunit alpha from Cavia porcellus (Guinea pig).